The sequence spans 715 residues: Phosphoribosylformylglycinamidine synthase subunit PurL (715 aa).

His-33 is a catalytic residue. An ATP-binding site is contributed by Tyr-36. Glu-77 contacts Mg(2+). Substrate-binding positions include 78-81 (SHNH) and Arg-100. His-79 acts as the Proton acceptor in catalysis. A Mg(2+)-binding site is contributed by Asp-101. Substrate is bound at residue Gln-225. Position 253 (Asp-253) interacts with Mg(2+). 297-299 (ESQ) is a binding site for substrate. Residues Asn-476 and Gly-513 each coordinate ATP. Residue Asn-514 participates in Mg(2+) binding. Ser-516 lines the substrate pocket.

Belongs to the FGAMS family. In terms of assembly, monomer. Part of the FGAM synthase complex composed of 1 PurL, 1 PurQ and 2 PurS subunits.

It localises to the cytoplasm. It catalyses the reaction N(2)-formyl-N(1)-(5-phospho-beta-D-ribosyl)glycinamide + L-glutamine + ATP + H2O = 2-formamido-N(1)-(5-O-phospho-beta-D-ribosyl)acetamidine + L-glutamate + ADP + phosphate + H(+). It participates in purine metabolism; IMP biosynthesis via de novo pathway; 5-amino-1-(5-phospho-D-ribosyl)imidazole from N(2)-formyl-N(1)-(5-phospho-D-ribosyl)glycinamide: step 1/2. In terms of biological role, part of the phosphoribosylformylglycinamidine synthase complex involved in the purines biosynthetic pathway. Catalyzes the ATP-dependent conversion of formylglycinamide ribonucleotide (FGAR) and glutamine to yield formylglycinamidine ribonucleotide (FGAM) and glutamate. The FGAM synthase complex is composed of three subunits. PurQ produces an ammonia molecule by converting glutamine to glutamate. PurL transfers the ammonia molecule to FGAR to form FGAM in an ATP-dependent manner. PurS interacts with PurQ and PurL and is thought to assist in the transfer of the ammonia molecule from PurQ to PurL. In Methanosarcina barkeri (strain Fusaro / DSM 804), this protein is Phosphoribosylformylglycinamidine synthase subunit PurL.